The sequence spans 186 residues: Ribosome-recycling factor (186 aa).

Residues 144–163 (EKDGVIGQDESRAQSERVQK) are disordered.

It belongs to the RRF family.

The protein localises to the cytoplasm. Functionally, responsible for the release of ribosomes from messenger RNA at the termination of protein biosynthesis. May increase the efficiency of translation by recycling ribosomes from one round of translation to another. The protein is Ribosome-recycling factor of Rhizobium johnstonii (strain DSM 114642 / LMG 32736 / 3841) (Rhizobium leguminosarum bv. viciae).